Here is a 240-residue protein sequence, read N- to C-terminus: Urease accessory protein UreF (240 aa).

Belongs to the UreF family. In terms of assembly, ureD, UreF and UreG form a complex that acts as a GTP-hydrolysis-dependent molecular chaperone, activating the urease apoprotein by helping to assemble the nickel containing metallocenter of UreC. The UreE protein probably delivers the nickel.

It is found in the cytoplasm. Its function is as follows. Required for maturation of urease via the functional incorporation of the urease nickel metallocenter. The chain is Urease accessory protein UreF from Rhodopseudomonas palustris (strain TIE-1).